Here is a 190-residue protein sequence, read N- to C-terminus: DNA-invertase (190 aa).

The 134-residue stretch at 2–135 (ATIGYIRVST…AGLAAARAQG (134 aa)) folds into the Resolvase/invertase-type recombinase catalytic domain. Residue serine 10 is the O-(5'-phospho-DNA)-serine intermediate of the active site. Positions 162–181 (RQQLAIIFGIGVSTLYRYFP) form a DNA-binding region, H-T-H motif.

The protein belongs to the site-specific recombinase resolvase family.

In terms of biological role, a DNA fragment of approximately 900 base pairs, adjacent to the fljB (H2) gene, which specifies the synthesis of phase-2 flagellin, can exist in either orientation with respect to fljB. The orientation of the inversion region controls expression of fljB. The hin gene occupies about two-thirds of the inversion region; it is required for the inversion of the fljB controlling region. The sequence is that of DNA-invertase (hin) from Salmonella abortus-equi.